The chain runs to 102 residues: Monothiol glutaredoxin-S8 (102 aa).

The 101-residue stretch at 1–101 (MEKIQKMISE…PMLKRFGALW (101 aa)) folds into the Glutaredoxin domain. Position 21 (Cys-21) interacts with [2Fe-2S] cluster. A Responsive for interaction with TGA factors motif is present at residues 99–102 (ALWL).

The protein belongs to the glutaredoxin family. CC-type subfamily.

It localises to the cytoplasm. Its subcellular location is the nucleus. In terms of biological role, may only reduce GSH-thiol disulfides, but not protein disulfides. The sequence is that of Monothiol glutaredoxin-S8 (GRXS8) from Arabidopsis thaliana (Mouse-ear cress).